The chain runs to 182 residues: Putative CTD phosphatase-like protein 355R (182 aa).

The FCP1 homology domain occupies 1-180; that stretch reads MKNIFLDLDN…MRLKDVLNRH (180 aa).

It belongs to the IIV-6 355R family.

In terms of biological role, may function as a phosphatase. This Invertebrate iridescent virus 6 (IIV-6) protein is Putative CTD phosphatase-like protein 355R.